The following is an 845-amino-acid chain: Beta-glucosidase B (845 aa).

The N-linked (GlcNAc...) asparagine glycan is linked to asparagine 202. Residue aspartate 230 is part of the active site. N-linked (GlcNAc...) asparagine glycosylation is present at asparagine 235. A PA14 domain is found at 406–557 (EGQPGWTLDF…HNRDLLSEAV (152 aa)). N-linked (GlcNAc...) asparagine glycans are attached at residues asparagine 591, asparagine 612, and asparagine 794.

Belongs to the glycosyl hydrolase 3 family.

It carries out the reaction Hydrolysis of terminal, non-reducing beta-D-glucosyl residues with release of beta-D-glucose.. It functions in the pathway glycan metabolism; cellulose degradation. Its function is as follows. Beta-glucosidases are one of a number of cellulolytic enzymes involved in the degradation of cellulosic biomass. Catalyzes the last step releasing glucose from the inhibitory cellobiose. The polypeptide is Beta-glucosidase B (bglB) (Emericella nidulans (strain FGSC A4 / ATCC 38163 / CBS 112.46 / NRRL 194 / M139) (Aspergillus nidulans)).